The primary structure comprises 43 residues: METATVLSIFISSLLLGITGYSIYTAFGPASKDLRDPFEEHEE.

Residues 5 to 27 (TVLSIFISSLLLGITGYSIYTAF) form a helical membrane-spanning segment.

Belongs to the PsbN family.

The protein localises to the plastid. It localises to the chloroplast thylakoid membrane. May play a role in photosystem I and II biogenesis. The polypeptide is Protein PsbN (Porphyra purpurea (Red seaweed)).